Consider the following 295-residue polypeptide: Bifunctional protein FolD (295 aa).

Residues 169-171 (GRG), threonine 196, and valine 237 contribute to the NADP(+) site.

This sequence belongs to the tetrahydrofolate dehydrogenase/cyclohydrolase family. As to quaternary structure, homodimer.

It carries out the reaction (6R)-5,10-methylene-5,6,7,8-tetrahydrofolate + NADP(+) = (6R)-5,10-methenyltetrahydrofolate + NADPH. It catalyses the reaction (6R)-5,10-methenyltetrahydrofolate + H2O = (6R)-10-formyltetrahydrofolate + H(+). It participates in one-carbon metabolism; tetrahydrofolate interconversion. In terms of biological role, catalyzes the oxidation of 5,10-methylenetetrahydrofolate to 5,10-methenyltetrahydrofolate and then the hydrolysis of 5,10-methenyltetrahydrofolate to 10-formyltetrahydrofolate. The sequence is that of Bifunctional protein FolD from Kineococcus radiotolerans (strain ATCC BAA-149 / DSM 14245 / SRS30216).